The primary structure comprises 316 residues: Porphobilinogen deaminase (316 aa).

An S-(dipyrrolylmethanemethyl)cysteine modification is found at cysteine 249.

This sequence belongs to the HMBS family. As to quaternary structure, monomer. Dipyrromethane is required as a cofactor.

It catalyses the reaction 4 porphobilinogen + H2O = hydroxymethylbilane + 4 NH4(+). Its pathway is porphyrin-containing compound metabolism; protoporphyrin-IX biosynthesis; coproporphyrinogen-III from 5-aminolevulinate: step 2/4. Its function is as follows. Tetrapolymerization of the monopyrrole PBG into the hydroxymethylbilane pre-uroporphyrinogen in several discrete steps. The protein is Porphobilinogen deaminase of Nitrobacter winogradskyi (strain ATCC 25391 / DSM 10237 / CIP 104748 / NCIMB 11846 / Nb-255).